The primary structure comprises 312 residues: R2-like ligand binding oxidase (312 aa).

3 residues coordinate Mn(2+): E68, E101, and H104. Residues V71 to Y162 constitute a cross-link (3-(O4'-tyrosyl)-valine (Val-Tyr)). Position 101 (E101) interacts with Fe cation. Residues E167, E202, and H205 each coordinate Fe cation.

The protein belongs to the ribonucleoside diphosphate reductase small chain family. R2-like ligand binding oxidase subfamily. In terms of assembly, homodimer. Fe cation serves as cofactor. It depends on Mn(2+) as a cofactor.

Functionally, probable oxidase that might be involved in lipid metabolism. The polypeptide is R2-like ligand binding oxidase (Mycobacterium sp. (strain JLS)).